A 468-amino-acid chain; its full sequence is RUS family member 1 (468 aa).

Position 2 is an N-acetylalanine (A2). Phosphothreonine is present on T49. Residues 247 to 267 (LLMLPLVSGCPGFSLGCFFFL) form a helical membrane-spanning segment.

Belongs to the RUS1 family.

The protein localises to the membrane. The protein is RUS family member 1 (Rusf1) of Pongo abelii (Sumatran orangutan).